The following is a 210-amino-acid chain: Glutathione S-transferase P (210 aa).

A GST N-terminal domain is found at 2–81 (PPYTVVYFPV…HLGRTLGLYG (80 aa)). Tyrosine 4 carries the post-translational modification Phosphotyrosine; by EGFR. Glutathione is bound by residues tyrosine 8, arginine 14, tryptophan 39, lysine 45, and 52 to 53 (QL). The residue at position 62 (threonine 62) is a Phosphothreonine. Residue 65-66 (QS) coordinates glutathione. A GST C-terminal domain is found at 83–204 (DQQEAALVDM…ASPEYVNLPI (122 aa)). An N6-succinyllysine mark is found at lysine 103 and lysine 116. An N6-acetyllysine modification is found at lysine 128. Residue tyrosine 199 is modified to Phosphotyrosine; by EGFR.

Belongs to the GST superfamily. Pi family. As to quaternary structure, homodimer. Interacts with CDK5.

The protein localises to the cytoplasm. It is found in the mitochondrion. It localises to the nucleus. It carries out the reaction RX + glutathione = an S-substituted glutathione + a halide anion + H(+). The catalysed reaction is prostaglandin J2 + glutathione = prostaglandin J2-S-(R)-glutathione. The enzyme catalyses prostaglandin J2 + glutathione = prostaglandin J2-S-(S)-glutathione. It catalyses the reaction prostaglandin A2 + glutathione = prostaglandin A2-S-(S)-glutathione. It carries out the reaction 11(S)-hydroxy-14(S),15(S)-epoxy-(5Z,8Z,12E)-eicosatrienoate + glutathione = (11S,15S)-dihydroxy-14(R)-S-glutathionyl-(5Z,8Z,12E)-eicosatrienoate. In terms of biological role, conjugation of reduced glutathione to a wide number of exogenous and endogenous hydrophobic electrophiles. Involved in the formation of glutathione conjugates of both prostaglandin A2 (PGA2) and prostaglandin J2 (PGJ2). Participates in the formation of novel hepoxilin regioisomers. Negatively regulates CDK5 activity via p25/p35 translocation to prevent neurodegeneration. The protein is Glutathione S-transferase P of Homo sapiens (Human).